The sequence spans 506 residues: Histidine ammonia-lyase (506 aa).

The segment at residues 143–145 is a cross-link (5-imidazolinone (Ala-Gly)); that stretch reads ASG. Serine 144 carries the 2,3-didehydroalanine (Ser) modification.

This sequence belongs to the PAL/histidase family. Post-translationally, contains an active site 4-methylidene-imidazol-5-one (MIO), which is formed autocatalytically by cyclization and dehydration of residues Ala-Ser-Gly.

The protein localises to the cytoplasm. It carries out the reaction L-histidine = trans-urocanate + NH4(+). The protein operates within amino-acid degradation; L-histidine degradation into L-glutamate; N-formimidoyl-L-glutamate from L-histidine: step 1/3. The polypeptide is Histidine ammonia-lyase (Salmonella choleraesuis (strain SC-B67)).